The sequence spans 270 residues: uncharacterized protein (270 aa).

It to T.pallidum TP_0127, TP_0315 and TP_0618.

This is an uncharacterized protein from Treponema pallidum (strain Nichols).